Consider the following 290-residue polypeptide: 30 kDa spicule matrix protein alpha (290 aa).

Residues 1–20 (MRGFVYVLVCVLALASFSRA) form the signal peptide. Residues 92–162 (ANMYCGQMHP…YTNWERMTAP (71 aa)) form the C-type lectin domain. Asn-102 is a glycosylation site (N-linked (GlcNAc...) asparagine).

In terms of tissue distribution, accumulates exclusively in mineralized tissues.

Matrix protein of the sea urchin embryo spicule. The function of the matrix proteins is to direct crystal growth in certain orientations and inhibit growth in others. This chain is 30 kDa spicule matrix protein alpha (SM30A), found in Strongylocentrotus purpuratus (Purple sea urchin).